The primary structure comprises 322 residues: Replication factor C small subunit (322 aa).

46 to 53 (GSAGIGKT) contributes to the ATP binding site.

It belongs to the activator 1 small subunits family. RfcS subfamily. Heteromultimer composed of small subunits (RfcS) and large subunits (RfcL).

Its function is as follows. Part of the RFC clamp loader complex which loads the PCNA sliding clamp onto DNA. In Methanoculleus marisnigri (strain ATCC 35101 / DSM 1498 / JR1), this protein is Replication factor C small subunit.